The following is a 106-amino-acid chain: MSNLIPGEIIPEQGQIELNLSKQVKTVTVSNSGDRPVQVGSHYHFYEANKALIFDREITYGMRLDIPAGTAIRFEPGDTTDVKLVPFSGLRNAYGFNSLVNGSLNS.

This sequence belongs to the urease beta subunit family. In terms of assembly, heterotrimer of UreA (gamma), UreB (beta) and UreC (alpha) subunits. Three heterotrimers associate to form the active enzyme.

The protein resides in the cytoplasm. It carries out the reaction urea + 2 H2O + H(+) = hydrogencarbonate + 2 NH4(+). It participates in nitrogen metabolism; urea degradation; CO(2) and NH(3) from urea (urease route): step 1/1. The sequence is that of Urease subunit beta from Prochlorococcus marinus (strain AS9601).